The chain runs to 58 residues: Large ribosomal subunit protein bL32c (58 aa).

This sequence belongs to the bacterial ribosomal protein bL32 family.

It localises to the plastid. The protein localises to the chloroplast. In Chaetosphaeridium globosum (Charophycean green alga), this protein is Large ribosomal subunit protein bL32c.